A 615-amino-acid polypeptide reads, in one-letter code: Envelope glycoprotein (615 aa).

Residues 1–84 (MPKRRAGFRK…VQNGAAAAFW (84 aa)) form the signal peptide. Over 85 to 378 (AYIPDPPMIQ…INTALSRPKR (294 aa)) the chain is Extracellular. 6 N-linked (GlcNAc...) asparagine; by host glycosylation sites follow: asparagine 108, asparagine 127, asparagine 178, asparagine 219, asparagine 275, and asparagine 319. The helical transmembrane segment at 379–402 (GLSLIILGIVSLITLIATAVTACV) threads the bilayer. Over 403 to 615 (SLAQSIQAAH…KERGAAGDDP (213 aa)) the chain is Cytoplasmic. Coiled-coil stretches lie at residues 411 to 461 (AHTV…FRMK) and 495 to 531 (IWFN…TVDN). A required for cell transformation region spans residues 590–593 (YRTM).

Interacts with sheep HYAL2 receptor.

It is found in the virion membrane. Its function is as follows. The envelope proteins induce cell transformation leading to ovine pulmonary adenocarcinoma (OPA), a contagious lung cancer of sheep and goat. They bind to the HYAL2 receptor for cell entry. Env proteins probably do not act as oncogenes by themselves, but may rather liberate an oncogenic factor that would normally be negatively regulated. One mechanism of transformation seems to involve activation of the phosphoinositide-3-OH kinase (PI3K)/Akt pathway but does not involve the virus receptor HYAL2, and the other seems to involve Env binding to HYAL2, HYAL2 degradation, and activation of the MST1R receptor tyrosine kinase, which is normally suppressed by HYAL2. This Ovis aries (Sheep) protein is Envelope glycoprotein (env).